Here is a 29-residue protein sequence, read N- to C-terminus: Orphan peptide CllNtx (29 aa).

In terms of processing, contains 3 disulfide bonds. As to expression, expressed by the venom gland.

The protein localises to the secreted. Its function is as follows. May act as a toxin. This Centruroides limpidus (Mexican scorpion) protein is Orphan peptide CllNtx.